We begin with the raw amino-acid sequence, 926 residues long: Vacuolar protein sorting-associated protein 39 homolog (926 aa).

Positions proline 15–glutamine 306 constitute a CNH domain. One copy of the CHCR repeat lies at aspartate 590–glutamine 768.

This sequence belongs to the VAM6/VPS39 family. In terms of assembly, probable core component of the homotypic fusion and vacuole protein sorting (HOPS) complex consisting of the core class C Vps proteins vps-11, vps-16, vps-18, and which further associates with vps-33.1, vps-39 and vps-41. May interact with lgg-2. Interacts with cuti-1.

It is found in the cytoplasm. It localises to the lysosome membrane. The protein localises to the late endosome membrane. Its subcellular location is the late endosome. The protein resides in the lysosome. Functionally, plays a role in vesicle-mediated protein trafficking to lysosomal compartments including the endocytic membrane transport and autophagic pathways. Believed to act in part as a component of the putative HOPS endosomal tethering complex which is proposed to be involved in the rab-5-to-rab-7 endosome conversion probably implicating sand-1, and via binding SNAREs and SNARE complexes to mediate tethering and docking events during SNARE-mediated membrane fusion. The HOPS complex is proposed to be recruited to rab-7 on the late endosomal membrane and to regulate late endocytic, phagocytic and autophagic traffic towards lysosomes. Involved in homotypic vesicle fusions between late endosomes and in heterotypic fusions between late endosomes and lysosomes. Required for fusion of endosomes. In association with lgg-2 mediates the tethering of autophagosomes with lysosomes to form autolysosomes. Within the HOPS complex, contributes to the normal development of gut granules in embryonic and adult intestinal cells. The protein is Vacuolar protein sorting-associated protein 39 homolog of Caenorhabditis elegans.